The chain runs to 557 residues: uncharacterized protein (557 aa).

Residues 1–30 form the signal peptide; that stretch reads MAPRRRRHTRIAGLRVVGTATLVAATTLTA. The N-palmitoyl cysteine moiety is linked to residue cysteine 31. Residue cysteine 31 is the site of S-diacylglycerol cysteine attachment.

The protein to M.bovis Mb2616c and M.leprae ML0489.

Its subcellular location is the cell membrane. This is an uncharacterized protein from Mycobacterium tuberculosis (strain CDC 1551 / Oshkosh).